A 37-amino-acid chain; its full sequence is Large ribosomal subunit protein bL36 (37 aa).

It belongs to the bacterial ribosomal protein bL36 family.

The protein is Large ribosomal subunit protein bL36 of Caldanaerobacter subterraneus subsp. tengcongensis (strain DSM 15242 / JCM 11007 / NBRC 100824 / MB4) (Thermoanaerobacter tengcongensis).